A 122-amino-acid polypeptide reads, in one-letter code: Small ribosomal subunit protein uS13 (122 aa).

The disordered stretch occupies residues 99 to 122 (RGQRTHTNARTRKGPAKAIAGKKK).

This sequence belongs to the universal ribosomal protein uS13 family. In terms of assembly, part of the 30S ribosomal subunit. Forms a loose heterodimer with protein S19. Forms two bridges to the 50S subunit in the 70S ribosome.

Its function is as follows. Located at the top of the head of the 30S subunit, it contacts several helices of the 16S rRNA. In the 70S ribosome it contacts the 23S rRNA (bridge B1a) and protein L5 of the 50S subunit (bridge B1b), connecting the 2 subunits; these bridges are implicated in subunit movement. Contacts the tRNAs in the A and P-sites. This is Small ribosomal subunit protein uS13 from Sinorhizobium medicae (strain WSM419) (Ensifer medicae).